The sequence spans 210 residues: Cell division protein SepF (210 aa).

Disordered stretches follow at residues 22–72 (DYYE…FDDA) and 79–98 (RGPR…RGST). Composition is skewed to basic and acidic residues over residues 37-60 (RPRE…REYD) and 79-88 (RGPREFDRTP).

The protein belongs to the SepF family. Homodimer. Interacts with FtsZ.

Its subcellular location is the cytoplasm. Its function is as follows. Cell division protein that is part of the divisome complex and is recruited early to the Z-ring. Probably stimulates Z-ring formation, perhaps through the cross-linking of FtsZ protofilaments. Its function overlaps with FtsA. The chain is Cell division protein SepF from Mycolicibacterium vanbaalenii (strain DSM 7251 / JCM 13017 / BCRC 16820 / KCTC 9966 / NRRL B-24157 / PYR-1) (Mycobacterium vanbaalenii).